A 403-amino-acid chain; its full sequence is Dual-specificity RNA methyltransferase RlmN (403 aa).

Catalysis depends on E126, which acts as the Proton acceptor. The region spanning 132–375 (ETDRGTLCVS…VRTPRGRDIL (244 aa)) is the Radical SAM core domain. An intrachain disulfide couples C139 to C378. 3 residues coordinate [4Fe-4S] cluster: C146, C150, and C153. Residues 204 to 205 (GE), S236, 258 to 260 (SLH), and N335 each bind S-adenosyl-L-methionine. C378 serves as the catalytic S-methylcysteine intermediate.

This sequence belongs to the radical SAM superfamily. RlmN family. [4Fe-4S] cluster is required as a cofactor.

It is found in the cytoplasm. The enzyme catalyses adenosine(2503) in 23S rRNA + 2 reduced [2Fe-2S]-[ferredoxin] + 2 S-adenosyl-L-methionine = 2-methyladenosine(2503) in 23S rRNA + 5'-deoxyadenosine + L-methionine + 2 oxidized [2Fe-2S]-[ferredoxin] + S-adenosyl-L-homocysteine. It catalyses the reaction adenosine(37) in tRNA + 2 reduced [2Fe-2S]-[ferredoxin] + 2 S-adenosyl-L-methionine = 2-methyladenosine(37) in tRNA + 5'-deoxyadenosine + L-methionine + 2 oxidized [2Fe-2S]-[ferredoxin] + S-adenosyl-L-homocysteine. Its function is as follows. Specifically methylates position 2 of adenine 2503 in 23S rRNA and position 2 of adenine 37 in tRNAs. m2A2503 modification seems to play a crucial role in the proofreading step occurring at the peptidyl transferase center and thus would serve to optimize ribosomal fidelity. The chain is Dual-specificity RNA methyltransferase RlmN from Bradyrhizobium sp. (strain ORS 278).